Consider the following 191-residue polypeptide: MEYIVEKIGMSRTITNPSIAVTLLRVVNAKVCEVEGGKALVAYPKGKASNKCVAGQQKKYNLSAEYNRFATLEVANTEAGDLDETPLNEAKILKVSFNTKGRGYSGVMKRHNFAGGPASHGSRFHRRHGSIGNREWPGRVQPGMKMAGHYGNTKVTIKNEVVSYDAENKILVVKGAVPGYNGAMGKIRIAK.

A disordered region spans residues 115 to 137 (GGPASHGSRFHRRHGSIGNREWP).

It belongs to the universal ribosomal protein uL3 family. As to quaternary structure, part of the 50S ribosomal subunit. Forms a cluster with proteins L14 and L19.

In terms of biological role, one of the primary rRNA binding proteins, it binds directly near the 3'-end of the 23S rRNA, where it nucleates assembly of the 50S subunit. This is Large ribosomal subunit protein uL3 (rplC) from Campylobacter jejuni subsp. jejuni serotype O:2 (strain ATCC 700819 / NCTC 11168).